Here is a 434-residue protein sequence, read N- to C-terminus: Histidinol dehydrogenase (434 aa).

NAD(+) contacts are provided by tyrosine 130, glutamine 188, and asparagine 211. Substrate is bound by residues serine 237, glutamine 259, and histidine 262. Glutamine 259 and histidine 262 together coordinate Zn(2+). Active-site proton acceptor residues include glutamate 326 and histidine 327. Substrate contacts are provided by histidine 327, aspartate 360, glutamate 414, and histidine 419. Aspartate 360 lines the Zn(2+) pocket. Zn(2+) is bound at residue histidine 419.

This sequence belongs to the histidinol dehydrogenase family. As to quaternary structure, homodimer. Requires Zn(2+) as cofactor.

It catalyses the reaction L-histidinol + 2 NAD(+) + H2O = L-histidine + 2 NADH + 3 H(+). It functions in the pathway amino-acid biosynthesis; L-histidine biosynthesis; L-histidine from 5-phospho-alpha-D-ribose 1-diphosphate: step 9/9. Its function is as follows. Catalyzes the sequential NAD-dependent oxidations of L-histidinol to L-histidinaldehyde and then to L-histidine. In Shigella dysenteriae serotype 1 (strain Sd197), this protein is Histidinol dehydrogenase.